The sequence spans 438 residues: Putative F-box/FBD/LRR-repeat protein At2g05300 (438 aa).

An F-box domain is found at 13–59; sequence EDRISQLPDPLLTQILNLLPTEEAVKTSVLSTRWRTLWLWVPNLELS. LRR repeat units lie at residues 135-166, 167-192, 235-261, and 318-346; these read CDSL…RLKD, IVFH…KIDV, CLII…DISL, and YVTL…ILER. The FBD domain occupies 362–409; the sequence is SMSSVPECLLTSLEFVEFKAPICGLGPEMMLVWYFLKNSPTLKKLTLP.

The protein is Putative F-box/FBD/LRR-repeat protein At2g05300 of Arabidopsis thaliana (Mouse-ear cress).